The primary structure comprises 268 residues: Ribosomal RNA small subunit methyltransferase A (268 aa).

6 residues coordinate S-adenosyl-L-methionine: Asn-18, Leu-20, Gly-45, Glu-66, Asp-91, and Asn-112.

The protein belongs to the class I-like SAM-binding methyltransferase superfamily. rRNA adenine N(6)-methyltransferase family. RsmA subfamily.

Its subcellular location is the cytoplasm. It catalyses the reaction adenosine(1518)/adenosine(1519) in 16S rRNA + 4 S-adenosyl-L-methionine = N(6)-dimethyladenosine(1518)/N(6)-dimethyladenosine(1519) in 16S rRNA + 4 S-adenosyl-L-homocysteine + 4 H(+). In terms of biological role, specifically dimethylates two adjacent adenosines (A1518 and A1519) in the loop of a conserved hairpin near the 3'-end of 16S rRNA in the 30S particle. May play a critical role in biogenesis of 30S subunits. The polypeptide is Ribosomal RNA small subunit methyltransferase A (Pseudoalteromonas translucida (strain TAC 125)).